A 223-amino-acid chain; its full sequence is Large ribosomal subunit protein bL21 (223 aa).

Belongs to the bacterial ribosomal protein bL21 family. As to quaternary structure, part of the 50S ribosomal subunit. Contacts protein L20.

In terms of biological role, this protein binds to 23S rRNA in the presence of protein L20. The sequence is that of Large ribosomal subunit protein bL21 from Mesorhizobium japonicum (strain LMG 29417 / CECT 9101 / MAFF 303099) (Mesorhizobium loti (strain MAFF 303099)).